A 603-amino-acid chain; its full sequence is Prostaglandin G/H synthase 2 (603 aa).

A signal peptide spans 1–17 (MLLPCALLAALLAAGHA). One can recognise an EGF-like domain in the interval 18–55 (ANPCCSLPCQNRGVCMTTGFDRYECDCTRTGYYGENCT). 4 disulfides stabilise this stretch: Cys-21/Cys-32, Cys-22/Cys-145, Cys-26/Cys-42, and Cys-44/Cys-54. 2 N-linked (GlcNAc...) asparagine glycosylation sites follow: Asn-53 and Asn-90. Arg-106 provides a ligand contact to substrate. A glycan (N-linked (GlcNAc...) asparagine) is linked at Asn-130. His-193 functions as the Proton acceptor in the catalytic mechanism. Tyr-341 contributes to the substrate binding site. Catalysis depends on Tyr-371, which acts as the For cyclooxygenase activity. His-374 is a heme b binding site. The cysteines at positions 555 and 561 are disulfide-linked.

It belongs to the prostaglandin G/H synthase family. As to quaternary structure, homodimer. The cofactor is heme b.

It is found in the microsome membrane. The protein localises to the endoplasmic reticulum membrane. The catalysed reaction is (5Z,8Z,11Z,14Z)-eicosatetraenoate + AH2 + 2 O2 = prostaglandin H2 + A + H2O. It catalyses the reaction (9Z,12Z)-octadecadienoate + AH2 + O2 = (9R)-hydroxy-(10E,12Z)-octadecadienoate + A + H2O. It carries out the reaction (9Z,12Z)-octadecadienoate + AH2 + O2 = (9S)-hydroxy-(10E,12Z)-octadecadienoate + A + H2O. The enzyme catalyses (9Z,12Z)-octadecadienoate + AH2 + O2 = (13S)-hydroxy-(9Z,11E)-octadecadienoate + A + H2O. The catalysed reaction is (9Z,12Z)-octadecadienoate + AH2 + O2 = (13R)-hydroxy-(9Z,11E)-octadecadienoate + A + H2O. The protein operates within lipid metabolism; prostaglandin biosynthesis. In terms of biological role, dual cyclooxygenase and peroxidase in the biosynthesis pathway of prostanoids, a class of C20 oxylipins mainly derived from arachidonate ((5Z,8Z,11Z,14Z)-eicosatetraenoate, AA, C20:4(n-6)), with a particular role in the inflammatory response. The cyclooxygenase activity oxygenates AA to the hydroperoxy endoperoxide prostaglandin G2 (PGG2), and the peroxidase activity reduces PGG2 to the hydroxy endoperoxide prostaglandin H2 (PGH2), the precursor of all 2-series prostaglandins and thromboxanes. This complex transformation is initiated by abstraction of hydrogen at carbon 13 (with S-stereochemistry), followed by insertion of molecular O2 to form the endoperoxide bridge between carbon 9 and 11 that defines prostaglandins. The insertion of a second molecule of O2 (bis-oxygenase activity) yields a hydroperoxy group in PGG2 that is then reduced to PGH2 by two electrons. Similarly catalyzes successive cyclooxygenation and peroxidation of dihomo-gamma-linoleate (DGLA, C20:3(n-6)) and eicosapentaenoate (EPA, C20:5(n-3)) to corresponding PGH1 and PGH3, the precursors of 1- and 3-series prostaglandins. In an alternative pathway of prostanoid biosynthesis, converts 2-arachidonoyl lysophopholipids to prostanoid lysophopholipids, which are then hydrolyzed by intracellular phospholipases to release free prostanoids. Metabolizes 2-arachidonoyl glycerol yielding the glyceryl ester of PGH2, a process that can contribute to pain response. Generates lipid mediators from n-3 and n-6 polyunsaturated fatty acids (PUFAs) via a lipoxygenase-type mechanism. Oxygenates PUFAs to hydroperoxy compounds and then reduces them to corresponding alcohols. Plays a role in the generation of resolution phase interaction products (resolvins) during both sterile and infectious inflammation. Metabolizes docosahexaenoate (DHA, C22:6(n-3)) to 17R-HDHA, a precursor of the D-series resolvins (RvDs). As a component of the biosynthetic pathway of E-series resolvins (RvEs), converts eicosapentaenoate (EPA, C20:5(n-3)) primarily to 18S-HEPE that is further metabolized by ALOX5 and LTA4H to generate 18S-RvE1 and 18S-RvE2. In vascular endothelial cells, converts docosapentaenoate (DPA, C22:5(n-3)) to 13R-HDPA, a precursor for 13-series resolvins (RvTs) shown to activate macrophage phagocytosis during bacterial infection. In activated leukocytes, contributes to oxygenation of hydroxyeicosatetraenoates (HETE) to diHETES (5,15-diHETE and 5,11-diHETE). Can also use linoleate (LA, (9Z,12Z)-octadecadienoate, C18:2(n-6)) as substrate and produce hydroxyoctadecadienoates (HODEs) in a regio- and stereospecific manner, being (9R)-HODE ((9R)-hydroxy-(10E,12Z)-octadecadienoate) and (13S)-HODE ((13S)-hydroxy-(9Z,11E)-octadecadienoate) its major products. During neuroinflammation, plays a role in neuronal secretion of specialized preresolving mediators (SPMs) 15R-lipoxin A4 that regulates phagocytic microglia. The polypeptide is Prostaglandin G/H synthase 2 (PTGS2) (Gallus gallus (Chicken)).